A 346-amino-acid chain; its full sequence is Ribonucleoside-diphosphate reductase subunit beta (346 aa).

Residues glutamate 89, glutamate 120, and histidine 123 each contribute to the Fe cation site. The active site involves tyrosine 129. Residues glutamate 193, glutamate 227, and histidine 230 each contribute to the Fe cation site.

The protein belongs to the ribonucleoside diphosphate reductase small chain family. As to quaternary structure, tetramer of two alpha and two beta subunits. Requires Fe cation as cofactor.

It carries out the reaction a 2'-deoxyribonucleoside 5'-diphosphate + [thioredoxin]-disulfide + H2O = a ribonucleoside 5'-diphosphate + [thioredoxin]-dithiol. Functionally, provides the precursors necessary for DNA synthesis. Catalyzes the biosynthesis of deoxyribonucleotides from the corresponding ribonucleotides. This chain is Ribonucleoside-diphosphate reductase subunit beta (nrdB), found in Chlamydia trachomatis serovar D (strain ATCC VR-885 / DSM 19411 / UW-3/Cx).